Reading from the N-terminus, the 271-residue chain is Glutamate racemase (271 aa).

Residues aspartate 12–serine 13 and tyrosine 44–glycine 45 contribute to the substrate site. The active-site Proton donor/acceptor is cysteine 75. Asparagine 76 to threonine 77 lines the substrate pocket. Cysteine 185 acts as the Proton donor/acceptor in catalysis. Threonine 186 to histidine 187 provides a ligand contact to substrate.

It belongs to the aspartate/glutamate racemases family.

The catalysed reaction is L-glutamate = D-glutamate. Its pathway is cell wall biogenesis; peptidoglycan biosynthesis. Functionally, provides the (R)-glutamate required for cell wall biosynthesis. This chain is Glutamate racemase, found in Methylococcus capsulatus (strain ATCC 33009 / NCIMB 11132 / Bath).